The sequence spans 143 residues: Large ribosomal subunit protein uL15 (143 aa).

Positions 1-59 (MELNGIKPADGAKHYKRRVGRGIGSGIGKTAGRGHKGQKSRAGGYHKVGFEGGQMPMQR) are disordered. Residues 21-31 (RGIGSGIGKTA) show a composition bias toward gly residues.

The protein belongs to the universal ribosomal protein uL15 family. Part of the 50S ribosomal subunit.

Functionally, binds to the 23S rRNA. The polypeptide is Large ribosomal subunit protein uL15 (Albidiferax ferrireducens (strain ATCC BAA-621 / DSM 15236 / T118) (Rhodoferax ferrireducens)).